The primary structure comprises 103 residues: Cell division suppressor protein YneA (103 aa).

The LysM domain maps to 36–87 (VKIEVQSGDTLWGLADQVNDSKSIDKNAFIDWVTQHNDLASTEIQPGDILVI).

The protein belongs to the YneA family.

It localises to the cytoplasm. Its function is as follows. Inhibits cell division during the SOS response. Affects a later stage of the cell division protein assembly, after the assembly of the Z ring, by probably suppressing recruitment of FtsL and/or DivIC to the division machinery. This chain is Cell division suppressor protein YneA, found in Bacillus pumilus (strain SAFR-032).